We begin with the raw amino-acid sequence, 173 residues long: Lithostathine-2 (173 aa).

The N-terminal stretch at methionine 1 to glycine 22 is a signal peptide. One can recognise a C-type lectin domain in the interval isoleucine 41–phenylalanine 171. 3 cysteine pairs are disulfide-bonded: cysteine 43–cysteine 54, cysteine 71–cysteine 169, and cysteine 144–cysteine 161.

Expressed only in regenerating islets and normal exocrine pancreas, but not in normal pancreatic islets. Expressed strongly in pancreas, weakly in liver, but not at all in gall bladder.

It is found in the secreted. Its function is as follows. Might act as an inhibitor of spontaneous calcium carbonate precipitation. This is Lithostathine-2 (Reg2) from Mus musculus (Mouse).